We begin with the raw amino-acid sequence, 164 residues long: Flavodoxin (164 aa).

A Flavodoxin-like domain is found at 4–160 (IGIFFGTDSG…RISKWVEQVK (157 aa)).

Belongs to the flavodoxin family. FMN is required as a cofactor.

Its function is as follows. Low-potential electron donor to a number of redox enzymes. The polypeptide is Flavodoxin (fldA) (Helicobacter pylori (strain ATCC 700392 / 26695) (Campylobacter pylori)).